The sequence spans 687 residues: A-kinase anchor protein 8 (687 aa).

Residues 1 to 195 are interaction with MCM2; the sequence is MEQGYGGYGA…FLRGRGQGRF (195 aa). Residues 1-210 form an interaction with DPY30 region; sequence MEQGYGGYGA…SSTFIRSDPF (210 aa). Ser72 bears the Phosphoserine mark. Disordered stretches follow at residues 105-124 and 185-218; these read KEGG…DRDS and GFLR…ASEP. Arg109 carries the post-translational modification Asymmetric dimethylarginine; alternate. Residue Arg109 is modified to Omega-N-methylarginine; alternate. A compositionally biased stretch (gly residues) spans 109 to 118; sequence RGGISSGGEG. The tract at residues 109-201 is interaction with DDX5; the sequence is RGGISSGGEG…QGRFQDRSNS (93 aa). Position 199 is a phosphoserine (Ser199). An omega-N-methylarginine mark is found at Arg232 and Arg276. The disordered stretch occupies residues 277–379; the sequence is SQTRIRDWPR…KQRRRDRMRD (103 aa). Basic and acidic residues-rich tracts occupy residues 280–294 and 311–320; these read RIRD…ERFG and PDAKLARADS. The short motif at 286–303 is the Bipartite nuclear localization signal element; it reads RRRGFERFGPDNMGRKRK. A Glycyl lysine isopeptide (Lys-Gly) (interchain with G-Cter in SUMO2) cross-link involves residue Lys314. A phosphoserine mark is found at Ser320, Ser325, and Ser336. Residues 321 to 331 show a composition bias toward acidic residues; that stretch reads DGDLSENDDGA. Over residues 335–357 the composition is skewed to basic and acidic residues; that stretch reads RSGDEEFRGEDDLCDSRKQRGEK. The interval 384–447 is involved in chromatin-binding; the sequence is RIQFACSVCK…NKKIEKRRQE (64 aa). 2 consecutive C2H2 AKAP95-type zinc fingers follow at residues 389-411 and 478-501; these read CSVC…SKFH and CLAC…SVDH. The involved in condensin complex recruitment stretch occupies residues 522 to 565; it reads SVLNNKHIVKMLEKYLKGEDPFVNETADLETEGDENVGEEKEET. At Thr552 the chain carries Phosphothreonine. Positions 568-585 are RII-binding; it reads EVAAEVLAEVITAAVKAV. Residues 572-589 form a required for interaction with MYCBP region; it reads EVLAEVITAAVKAVEGEG. Positions 624-659 are disordered; it reads QTCEAASETRSIEDKTRGEAAEARNEAAMPTADAGS. Residues 633-648 are compositionally biased toward basic and acidic residues; sequence RSIEDKTRGEAAEARN. At Ser659 the chain carries Phosphoserine.

The protein belongs to the AKAP95 family. As to quaternary structure, binds to the PKA RII-alpha regulatory subunit PRKAR2A. Interacts (via C-terminus) with FIGN. Interacts with NCAPD2, CCND3, CCNE1, MCM2, RPS6KA1, DDX5, PDE4A. Interacts with MYCBP; MYCBP is translocated to the nucleus and the interaction prevents the association of the PKA catalytic subunit leading to suppression of PKA activity. Interacts with CCND1, CASP3. Interacts with NFKB1; detetcted in the cytoplasm. Interacts with DPY30; mediating AKAP8 association with at least the MLL4/WBP7 HMT complex. Interacts with HDAC3; increased during mitosis. Interacts with GJA1; in the nucleus and in the nuclear membrane; the nuclear association increases with progress of cell cycle G1, S and G2 phase and decreases in M phase. In terms of processing, phosphorylated on tyrosine residues probably by SRC subfamily protein kinases; multiple phosphorylation is leading to dissociation from nuclear structures implicated in chromatin structural changes.

The protein localises to the nucleus matrix. The protein resides in the nucleus. It localises to the nucleolus. Its subcellular location is the cytoplasm. In terms of biological role, anchoring protein that mediates the subcellular compartmentation of cAMP-dependent protein kinase (PKA type II). Acts as an anchor for a PKA-signaling complex onto mitotic chromosomes, which is required for maintenance of chromosomes in a condensed form throughout mitosis. Recruits condensin complex subunit NCAPD2 to chromosomes required for chromatin condensation; the function appears to be independent from PKA-anchoring. Specifically involved in recruitment of CAPD2 to, and condensation of maternal but not paternal chromosomes. May help to deliver cyclin D/E to CDK4 to facilitate cell cycle progression. Required for cell cycle G2/M transition and histone deacetylation during mitosis. In mitotic cells recruits HDAC3 to the vicinity of chromatin leading to deacetylation and subsequent phosphorylation at 'Ser-10' of histone H3; in this function may act redundantly with AKAP8L. Involved in nuclear retention of RPS6KA1 upon ERK activation thus inducing cell proliferation. May be involved in regulation of DNA replication by acting as scaffold for MCM2. Enhances HMT activity of the KMT2 family MLL4/WBP7 complex and is involved in transcriptional regulation. In a teratocarcinoma cell line is involved in retinoic acid-mediated induction of developmental genes implicating H3 'Lys-4' methylation. May be involved in recruitment of active CASP3 to the nucleus in apoptotic cells. May act as a carrier protein of GJA1 for its transport to the nucleus. May play a repressive role in the regulation of rDNA transcription. Preferentially binds GC-rich DNA in vitro. In cells, associates with ribosomal RNA (rRNA) chromatin, preferentially with rRNA promoter and transcribed regions. Involved in modulation of Toll-like receptor signaling. Required for the cAMP-dependent suppression of TNF-alpha in early stages of LPS-induced macrophage activation; the function probably implicates targeting of PKA to NFKB1. This chain is A-kinase anchor protein 8 (Akap8), found in Mus musculus (Mouse).